We begin with the raw amino-acid sequence, 154 residues long: Ribosomal RNA large subunit methyltransferase H (154 aa).

Residues glycine 103 and 122-127 (FSKLTF) each bind S-adenosyl-L-methionine.

Belongs to the RNA methyltransferase RlmH family. Homodimer.

It is found in the cytoplasm. The catalysed reaction is pseudouridine(1915) in 23S rRNA + S-adenosyl-L-methionine = N(3)-methylpseudouridine(1915) in 23S rRNA + S-adenosyl-L-homocysteine + H(+). Functionally, specifically methylates the pseudouridine at position 1915 (m3Psi1915) in 23S rRNA. In Caldicellulosiruptor saccharolyticus (strain ATCC 43494 / DSM 8903 / Tp8T 6331), this protein is Ribosomal RNA large subunit methyltransferase H.